We begin with the raw amino-acid sequence, 546 residues long: NAD(P)H-quinone oxidoreductase chain 4 (546 aa).

Transmembrane regions (helical) follow at residues 24-44, 56-76, 108-128, 132-152, 156-176, 188-208, 232-252, 263-283, 297-317, 326-346, 352-372, 396-416, 437-457, and 484-504; these read FPWL…IPFF, FALS…INGF, MPLI…AWPV, PKLF…VFAV, LLFF…LAIW, FIIY…AMGF, ILCY…VPLH, TAPV…YALL, FSPL…LTSF, IAYS…SFSS, AMLQ…LVGA, FALW…SGFV, VIMA…LLSM, and IYII…PRLV.

The protein belongs to the complex I subunit 4 family.

It localises to the cellular thylakoid membrane. It carries out the reaction a plastoquinone + NADH + (n+1) H(+)(in) = a plastoquinol + NAD(+) + n H(+)(out). The catalysed reaction is a plastoquinone + NADPH + (n+1) H(+)(in) = a plastoquinol + NADP(+) + n H(+)(out). In terms of biological role, NDH-1 shuttles electrons from NAD(P)H, via FMN and iron-sulfur (Fe-S) centers, to quinones in the respiratory chain. The immediate electron acceptor for the enzyme in this species is believed to be plastoquinone. Couples the redox reaction to proton translocation (for every two electrons transferred, four hydrogen ions are translocated across the cytoplasmic membrane), and thus conserves the redox energy in a proton gradient. The sequence is that of NAD(P)H-quinone oxidoreductase chain 4 from Prochlorococcus marinus subsp. pastoris (strain CCMP1986 / NIES-2087 / MED4).